A 337-amino-acid chain; its full sequence is MTTPTPPVLLRTAGELHARVRRGRRAVVMTMGALHEGHATLIRTARDIAGPDGEVVVTVFVNPLQFGAGEDLDRYPRTLDADLEIAGRAGADAVFAPAVDEVYPGGEPQVRVTAGPMGGRLEGASRPGHFDGMLTVVAKLLHLTRPDLALYGQKDAQQLALIRRMVRDLNFGVEIVGVPTVREEDGLALSSRNRYLSTAERRTALALSQALFAGLDRHAAQEALCARAREVPATQARAEALSALGESRAAADAHAVATSAPGSATAVRDAARLVLDDAARATPPLELDYLALVDPSDFTEIGDDHTGEAVLAVAARVGATRLIDNVHLTFGPLGAAS.

31-38 (MGALHEGH) lines the ATP pocket. His-38 (proton donor) is an active-site residue. Gln-65 is a (R)-pantoate binding site. Gln-65 is a beta-alanine binding site. ATP is bound at residue 152-155 (GQKD). Residue Gln-158 coordinates (R)-pantoate. ATP is bound by residues Val-181 and 189–192 (LSSR).

The protein belongs to the pantothenate synthetase family. Homodimer.

It is found in the cytoplasm. It carries out the reaction (R)-pantoate + beta-alanine + ATP = (R)-pantothenate + AMP + diphosphate + H(+). It functions in the pathway cofactor biosynthesis; (R)-pantothenate biosynthesis; (R)-pantothenate from (R)-pantoate and beta-alanine: step 1/1. Its function is as follows. Catalyzes the condensation of pantoate with beta-alanine in an ATP-dependent reaction via a pantoyl-adenylate intermediate. The sequence is that of Pantothenate synthetase from Streptomyces coelicolor (strain ATCC BAA-471 / A3(2) / M145).